We begin with the raw amino-acid sequence, 107 residues long: Ig kappa chain V-VI region SAPC 10 (107 aa).

Residues 1–23 (EIVLTQSPAITAASLGQKVTITC) are framework-1. A disulfide bond links Cys-23 and Cys-87. The complementarity-determining-1 stretch occupies residues 24-33 (SASSSVSYMH). A framework-2 region spans residues 34–48 (WYQQKSGTSPKPWIY). The complementarity-determining-2 stretch occupies residues 49–55 (EISKLAS). A framework-3 region spans residues 56–87 (GVPARFSGSGSGTSYSLTISSMEAEDAAIYYC). Residues 88–96 (QQWNYPLIT) are complementarity-determining-3. A framework-4 region spans residues 97–106 (FGGGTKLEIK).

This is Ig kappa chain V-VI region SAPC 10 from Mus musculus (Mouse).